A 329-amino-acid chain; its full sequence is Uroporphyrinogen decarboxylase (329 aa).

Residues 22–26, D71, Y140, S195, and H307 contribute to the substrate site; that span reads RQVGR.

The protein belongs to the uroporphyrinogen decarboxylase family. Homodimer.

It localises to the cytoplasm. It carries out the reaction uroporphyrinogen III + 4 H(+) = coproporphyrinogen III + 4 CO2. It participates in porphyrin-containing compound metabolism; protoporphyrin-IX biosynthesis; coproporphyrinogen-III from 5-aminolevulinate: step 4/4. Functionally, catalyzes the decarboxylation of four acetate groups of uroporphyrinogen-III to yield coproporphyrinogen-III. The protein is Uroporphyrinogen decarboxylase of Chlamydia pneumoniae (Chlamydophila pneumoniae).